Consider the following 390-residue polypeptide: MPPSGLRLLPLLLPLPWLLVLTPGRPAAGLSTCKTIDMELVKRKRIEAIRGQILSKLRLASPPSQGEVPPGPLPEAVLALYNSTRDRVAGESADPEPEPEADYYAKEVTRVLMVDRNNAIYDKTKDITHSIYMFFNTSDIREAVPEPPLLSRAELRLQRFKSTVEQHVELYQKYSNNSWRYLGNRLLTPTDTPEWLSFDVTGVVRQWLNQGDGIQGFRFSAHCSCDSKDNVLHVEINGISPKRRGDLGTIHDMNRPFLLLMATPLERAQHLHSSRHRRALDTNYCFSSTEKNCCVRQLYIDFRKDLGWKWIHEPKGYHANFCLGPCPYIWSLDTQYSKVLALYNQHNPGASASPCCVPQALEPLPIVYYVGRKPKVEQLSNMIVRSCKCS.

The first 29 residues, 1–29 (MPPSGLRLLPLLLPLPWLLVLTPGRPAAG), serve as a signal peptide directing secretion. Residues 30 to 74 (LSTCKTIDMELVKRKRIEAIRGQILSKLRLASPPSQGEVPPGPLP) form a straightjacket domain region. An arm domain region spans residues 75–271 (EAVLALYNST…ATPLERAQHL (197 aa)). 3 N-linked (GlcNAc...) asparagine glycosylation sites follow: asparagine 82, asparagine 136, and asparagine 176. The segment at 226-252 (DSKDNVLHVEINGISPKRRGDLGTIHD) is bowtie tail. A Cell attachment site motif is present at residues 244-246 (RGD). 4 cysteine pairs are disulfide-bonded: cysteine 285–cysteine 294, cysteine 293–cysteine 356, cysteine 322–cysteine 387, and cysteine 326–cysteine 389.

It belongs to the TGF-beta family. As to quaternary structure, homodimer; disulfide-linked. Interacts with the serine proteases, HTRA1 and HTRA3: the interaction with either inhibits TGFB1-mediated signaling and the HTRA protease activity is required for this inhibition. May interact with THSD4; this interaction may lead to sequestration by FBN1 microfibril assembly and attenuation of TGFB signaling. Interacts with CD109, DPT and ASPN. Interacts with EFEMP2. Interacts with TSKU; the interaction contributes to regulation of the hair cycle. Interacts with TGFBR3. Homodimer; disulfide-linked. Interacts with transforming growth factor beta-1 (TGF-beta-1) chain; interaction is non-covalent and maintains TGF-beta-1 in a latent state; each latency-associated peptide (LAP) monomer interacts with TGF-beta-1 in the other monomer. Interacts with LTBP1; leading to regulation of TGF-beta-1 activation. Interacts with LRRC32/GARP; leading to regulation of TGF-beta-1 activation on the surface of activated regulatory T-cells (Tregs). Interacts with LRRC33/NRROS; leading to regulation of TGF-beta-1 activation in macrophages and microglia. Interacts (via cell attachment site) with integrins ITGAV and ITGB6 (ITGAV:ITGB6), leading to release of the active TGF-beta-1. Interacts with NREP; the interaction results in a decrease in TGFB1 autoinduction. Interacts with HSP90AB1; inhibits latent TGFB1 activation. In terms of assembly, homodimer; disulfide-linked. Interacts with TGF-beta receptors (TGFBR1 and TGFBR2), leading to signal transduction. Post-translationally, transforming growth factor beta-1 proprotein: The precursor proprotein is cleaved in the Golgi apparatus by FURIN to form Transforming growth factor beta-1 (TGF-beta-1) and Latency-associated peptide (LAP) chains, which remain non-covalently linked, rendering TGF-beta-1 inactive. N-glycosylated. Deglycosylation leads to activation of Transforming growth factor beta-1 (TGF-beta-1); mechanisms triggering deglycosylation-driven activation of TGF-beta-1 are however unclear. In terms of tissue distribution, abundant in the bone matrix. Expressed in cardiomyocytes.

Its subcellular location is the secreted. It is found in the extracellular space. The protein localises to the extracellular matrix. Transforming growth factor beta-1 proprotein: Precursor of the Latency-associated peptide (LAP) and Transforming growth factor beta-1 (TGF-beta-1) chains, which constitute the regulatory and active subunit of TGF-beta-1, respectively. Functionally, required to maintain the Transforming growth factor beta-1 (TGF-beta-1) chain in a latent state during storage in extracellular matrix. Associates non-covalently with TGF-beta-1 and regulates its activation via interaction with 'milieu molecules', such as LTBP1, LRRC32/GARP and LRRC33/NRROS, that control activation of TGF-beta-1. Interaction with LRRC33/NRROS regulates activation of TGF-beta-1 in macrophages and microglia. Interaction with LRRC32/GARP controls activation of TGF-beta-1 on the surface of activated regulatory T-cells (Tregs). Interaction with integrins (ITGAV:ITGB6 or ITGAV:ITGB8) results in distortion of the Latency-associated peptide chain and subsequent release of the active TGF-beta-1. Its function is as follows. Multifunctional protein that regulates the growth and differentiation of various cell types and is involved in various processes, such as normal development, immune function, microglia function and responses to neurodegeneration. Activation into mature form follows different steps: following cleavage of the proprotein in the Golgi apparatus, Latency-associated peptide (LAP) and Transforming growth factor beta-1 (TGF-beta-1) chains remain non-covalently linked rendering TGF-beta-1 inactive during storage in extracellular matrix. At the same time, LAP chain interacts with 'milieu molecules', such as LTBP1, LRRC32/GARP and LRRC33/NRROS that control activation of TGF-beta-1 and maintain it in a latent state during storage in extracellular milieus. TGF-beta-1 is released from LAP by integrins (ITGAV:ITGB6 or ITGAV:ITGB8): integrin-binding to LAP stabilizes an alternative conformation of the LAP bowtie tail and results in distortion of the LAP chain and subsequent release of the active TGF-beta-1. Once activated following release of LAP, TGF-beta-1 acts by binding to TGF-beta receptors (TGFBR1 and TGFBR2), which transduce signal. While expressed by many cells types, TGF-beta-1 only has a very localized range of action within cell environment thanks to fine regulation of its activation by Latency-associated peptide chain (LAP) and 'milieu molecules'. Plays an important role in bone remodeling: acts as a potent stimulator of osteoblastic bone formation, causing chemotaxis, proliferation and differentiation in committed osteoblasts. Can promote either T-helper 17 cells (Th17) or regulatory T-cells (Treg) lineage differentiation in a concentration-dependent manner. At high concentrations, leads to FOXP3-mediated suppression of RORC and down-regulation of IL-17 expression, favoring Treg cell development. At low concentrations in concert with IL-6 and IL-21, leads to expression of the IL-17 and IL-23 receptors, favoring differentiation to Th17 cells. Stimulates sustained production of collagen through the activation of CREB3L1 by regulated intramembrane proteolysis (RIP). Mediates SMAD2/3 activation by inducing its phosphorylation and subsequent translocation to the nucleus. Positively regulates odontoblastic differentiation in dental papilla cells, via promotion of IPO7-mediated translocation of phosphorylated SMAD2 to the nucleus and subsequent transcription of target genes. Can induce epithelial-to-mesenchymal transition (EMT) and cell migration in various cell types. The polypeptide is Transforming growth factor beta-1 proprotein (Tgfb1) (Rattus norvegicus (Rat)).